The primary structure comprises 927 residues: DIS3-like exonuclease 2 (927 aa).

Basic residues predominate over residues Met1–Lys12. Residues Met1–Ser168 are disordered. Residues Arg13–Lys31 show a composition bias toward basic and acidic residues. Basic residues predominate over residues Val97–Ser106. Residues Lys107–Asn152 show a composition bias toward basic and acidic residues. Positions Ser153–Ser168 are enriched in polar residues. Mg(2+) is bound by residues Asp453 and Asp462.

It belongs to the RNR ribonuclease family. DIS3L2 subfamily. The cofactor is Mg(2+). Mn(2+) is required as a cofactor.

It is found in the cytoplasm. The protein resides in the P-body. Its function is as follows. 3'-5'-exoribonuclease that specifically recognizes RNAs polyuridylated at their 3' end and mediates their degradation. Component of an exosome-independent RNA degradation pathway that mediates degradation of cytoplasmic mRNAs that have been deadenylated and subsequently uridylated at their 3'. This is DIS3-like exonuclease 2 (dis32) from Schizosaccharomyces pombe (strain 972 / ATCC 24843) (Fission yeast).